We begin with the raw amino-acid sequence, 465 residues long: MKHIVKHIHFVGIGGAGMSGIAEVLVNLGYAVSGSDLSRNAVTDRLEALGARIAIGHDAANIEGANAVVVSTAVRSDNPEVLAARHQGVPIVQRAVMLAELMRLKQGIAIAGTHGKTTTTSLVASVLAAGGLDPTFVIGGRLISAGANARLGTGDFIVAEADESDASFLNLYPVIEVITNIDADHMDTYGHDFARLKQAFIEFTQRLPFYGSAVVCVDDPNVRQIIPFISKPVVRYGLSPDAQVRAEDIDARDGRMHFTVIREGRAPLAVVLNMPGLHNVQNALAAIAIATDLGVSDDAIQLALAEFNGVGRRFQRYGDVPSADGGQYTLIDDYGHHPVEMAATIAAARGAFPGRRLVLAFQPHRYTRTRDCFDDFVNVLSTVDALVLTEVYAAGEAAIPTASGDALSRALRAVGKVDPVFVATVDDVPDALAKVAQNGDVVITMGAGSIGGVPAKLVQHIQQKA.

112-118 (GTHGKTT) provides a ligand contact to ATP.

Belongs to the MurCDEF family.

It localises to the cytoplasm. It catalyses the reaction UDP-N-acetyl-alpha-D-muramate + L-alanine + ATP = UDP-N-acetyl-alpha-D-muramoyl-L-alanine + ADP + phosphate + H(+). It participates in cell wall biogenesis; peptidoglycan biosynthesis. Cell wall formation. This chain is UDP-N-acetylmuramate--L-alanine ligase, found in Burkholderia orbicola (strain MC0-3).